Here is a 347-residue protein sequence, read N- to C-terminus: Quinolinate synthase (347 aa).

Histidine 47 and serine 68 together coordinate iminosuccinate. Cysteine 113 serves as a coordination point for [4Fe-4S] cluster. Residues 139-141 (YAN) and serine 156 contribute to the iminosuccinate site. Cysteine 200 serves as a coordination point for [4Fe-4S] cluster. Iminosuccinate is bound by residues 226 to 228 (HPE) and threonine 243. Residue cysteine 297 participates in [4Fe-4S] cluster binding.

Belongs to the quinolinate synthase family. Type 1 subfamily. It depends on [4Fe-4S] cluster as a cofactor.

It localises to the cytoplasm. The enzyme catalyses iminosuccinate + dihydroxyacetone phosphate = quinolinate + phosphate + 2 H2O + H(+). It functions in the pathway cofactor biosynthesis; NAD(+) biosynthesis; quinolinate from iminoaspartate: step 1/1. In terms of biological role, catalyzes the condensation of iminoaspartate with dihydroxyacetone phosphate to form quinolinate. This is Quinolinate synthase from Salmonella choleraesuis (strain SC-B67).